The sequence spans 557 residues: Iron-sulfur cluster assembly SufBD family protein ABCI8, chloroplastic (557 aa).

The disordered stretch occupies residues 1–47 (MASLLANGISSFSPQPTSDSSKSPKGFHPKPESLKFPSPKSLNPTRP). The transit peptide at 1-52 (MASLLANGISSFSPQPTSDSSKSPKGFHPKPESLKFPSPKSLNPTRPIFKLR) directs the protein to the chloroplast. Residues 10–24 (SSFSPQPTSDSSKSP) are compositionally biased toward low complexity.

The protein belongs to the iron-sulfur cluster assembly SufBD family.

The protein localises to the plastid. It localises to the chloroplast. Its function is as follows. Involved in light signaling, probably by mediating the transport and correct distribution of protoporphyrin IX, a chlorophyll precursor, in response to far-red light. In Arabidopsis thaliana (Mouse-ear cress), this protein is Iron-sulfur cluster assembly SufBD family protein ABCI8, chloroplastic (ABCI8).